The sequence spans 236 residues: Heme oxygenase (236 aa).

Histidine 17 serves as a coordination point for heme b.

Belongs to the heme oxygenase family.

The protein localises to the plastid. The protein resides in the chloroplast. The catalysed reaction is heme b + 3 reduced [NADPH--hemoprotein reductase] + 3 O2 = biliverdin IXalpha + CO + Fe(2+) + 3 oxidized [NADPH--hemoprotein reductase] + 3 H2O + H(+). Its function is as follows. Catalyzes the opening of the heme ring with the release of iron. Key enzyme in the synthesis of the chromophoric part of the photosynthetic antennae. This chain is Heme oxygenase (pbsA), found in Porphyra purpurea (Red seaweed).